A 361-amino-acid polypeptide reads, in one-letter code: Protein-glutamate methylesterase/protein-glutamine glutaminase 1 (361 aa).

The Response regulatory domain maps to 10-127 (KVLVVDDSAL…REGIEEKAQE (118 aa)). Position 61 is a 4-aspartylphosphate (Asp-61). One can recognise a CheB-type methylesterase domain in the interval 167–359 (FATTDKLIAV…ASVKRWYAEN (193 aa)). Catalysis depends on residues Ser-179, His-205, and Asp-301.

Belongs to the CheB family. Phosphorylated by CheA. Phosphorylation of the N-terminal regulatory domain activates the methylesterase activity.

The protein localises to the cytoplasm. The enzyme catalyses [protein]-L-glutamate 5-O-methyl ester + H2O = L-glutamyl-[protein] + methanol + H(+). It carries out the reaction L-glutaminyl-[protein] + H2O = L-glutamyl-[protein] + NH4(+). In terms of biological role, involved in chemotaxis. Part of a chemotaxis signal transduction system that modulates chemotaxis in response to various stimuli. Catalyzes the demethylation of specific methylglutamate residues introduced into the chemoreceptors (methyl-accepting chemotaxis proteins or MCP) by CheR. Also mediates the irreversible deamidation of specific glutamine residues to glutamic acid. The polypeptide is Protein-glutamate methylesterase/protein-glutamine glutaminase 1 (Hahella chejuensis (strain KCTC 2396)).